Consider the following 879-residue polypeptide: Probable phospholipid transport protein YdbH (879 aa).

The Cytoplasmic portion of the chain corresponds to 1–6 (MLGKYK). A helical transmembrane segment spans residues 7-29 (AVLALLLLIILVPLTLLMTLGLW). Residues 30 to 879 (VPTLAGIWLP…PQGKECEEKQ (850 aa)) lie on the Periplasmic side of the membrane.

In terms of assembly, interacts with the outer membrane lipoprotein YnbE.

Its subcellular location is the cell inner membrane. Involved in outer membrane lipid homeostasis. Interacts with the outer membrane lipoprotein YnbE to form a functional protein bridge connecting the inner and outer membranes of the cell. Likely transports phospholipids between the inner membrane and the outer membrane. It would provide a bridge-like structure that protects phospholipids as they travel across the periplasm. In terms of biological role, tamB, YdbH and YhdP are redundant, but not equivalent, in performing an essential function for growth and maintaining lipid homeostasis in the outer membrane. Any of these three proteins is sufficient for growth. This chain is Probable phospholipid transport protein YdbH (ydbH), found in Escherichia coli (strain K12).